The primary structure comprises 261 residues: Pimeloyl-[acyl-carrier protein] methyl ester esterase (261 aa).

Positions 15 to 243 (HLVLLHGWGL…AAHAPFISHP (229 aa)) constitute an AB hydrolase-1 domain. Residues Trp-22, 83 to 84 (SL), and 144 to 148 (FLALQ) each bind substrate. The Nucleophile role is filled by Ser-83. Active-site residues include Asp-208 and His-236. His-236 lines the substrate pocket.

The protein belongs to the AB hydrolase superfamily. Carboxylesterase BioH family. Monomer.

The protein localises to the cytoplasm. It catalyses the reaction 6-carboxyhexanoyl-[ACP] methyl ester + H2O = 6-carboxyhexanoyl-[ACP] + methanol + H(+). The protein operates within cofactor biosynthesis; biotin biosynthesis. In terms of biological role, the physiological role of BioH is to remove the methyl group introduced by BioC when the pimeloyl moiety is complete. It allows to synthesize pimeloyl-ACP via the fatty acid synthetic pathway through the hydrolysis of the ester bonds of pimeloyl-ACP esters. This Proteus mirabilis (strain HI4320) protein is Pimeloyl-[acyl-carrier protein] methyl ester esterase.